A 232-amino-acid polypeptide reads, in one-letter code: Ribonuclease P protein component 3 (232 aa).

Belongs to the eukaryotic/archaeal RNase P protein component 3 family. In terms of assembly, consists of a catalytic RNA component and at least 4-5 protein subunits. Forms a subcomplex with Rnp2 which stimulates the catalytic RNA.

The protein localises to the cytoplasm. The catalysed reaction is Endonucleolytic cleavage of RNA, removing 5'-extranucleotides from tRNA precursor.. In terms of biological role, part of ribonuclease P, a protein complex that generates mature tRNA molecules by cleaving their 5'-ends. This chain is Ribonuclease P protein component 3, found in Methanocaldococcus jannaschii (strain ATCC 43067 / DSM 2661 / JAL-1 / JCM 10045 / NBRC 100440) (Methanococcus jannaschii).